A 326-amino-acid chain; its full sequence is Serpentine receptor class alpha-12 (326 aa).

Over Met1–Gln17 the chain is Extracellular. A helical transmembrane segment spans residues Ile18–Ala38. Residues Ile39 to Val54 are Cytoplasmic-facing. Residues Leu55–Phe75 traverse the membrane as a helical segment. Residues Lys76–Thr101 are Extracellular-facing. The chain crosses the membrane as a helical span at residues Thr102–Phe122. Residues Arg123 to Ala138 lie on the Cytoplasmic side of the membrane. The chain crosses the membrane as a helical span at residues Leu139–Ile159. Residues Arg160 to Thr185 are Extracellular-facing. A helical membrane pass occupies residues Tyr186–Leu206. The Cytoplasmic portion of the chain corresponds to Arg207–Thr234. Residues Ile235–Phe255 traverse the membrane as a helical segment. Topologically, residues Met256–Asn270 are extracellular. The helical transmembrane segment at Val271–Phe291 threads the bilayer. Over Ser292–Gly326 the chain is Cytoplasmic.

This sequence belongs to the nematode receptor-like protein sra family.

The protein resides in the membrane. The sequence is that of Serpentine receptor class alpha-12 from Caenorhabditis briggsae.